We begin with the raw amino-acid sequence, 210 residues long: CLAVATA3/ESR (CLE)-related protein 4D (210 aa).

Positions 1 to 21 (MAKNAMLCLLILSVVLALAFA) are cleaved as a signal peptide. A required for secretion from the host cytoplasm to the host apoplasm region spans residues 21-83 (ATNKKDDEEP…SNQLPNNNWM (63 aa)). N-linked (GlcNAc...) asparagine glycans are attached at residues Asn-32 and Asn-59. Positions 115 to 210 (RRKTGTHSQR…APAGPDPIHH (96 aa)) are disordered. Basic and acidic residues-rich tracts occupy residues 125–137 (HHEETTLEQEKRG), 144–158 (PIHHQDTTFEQEKRG), 165–179 (PIHHQDTTLEQEKRV), and 186–200 (PIHHQDTKFEQEKRG). An A-1 repeat occupies 127–135 (EETTLEQEK). The 4 X approximate repeat A stretch occupies residues 129-198 (TTLEQEKRGA…HQDTKFEQEK (70 aa)). A CLE-1 repeat occupies 136–147 (RGAPAGPDPIHH). The segment at 136 to 210 (RGAPAGPDPI…APAGPDPIHH (75 aa)) is 4 X approximate repeat CLE. The A-2 repeat unit spans residues 148 to 156 (QDTTFEQEK). The CLE-2 repeat unit spans residues 157–168 (RGAPAGPDPIHH). An A-3 repeat occupies 169–177 (QDTTLEQEK). The stretch at 178 to 189 (RVAGAGPDPIHH) is one CLE-3 repeat. One copy of the A-4 repeat lies at 190–198 (QDTKFEQEK). The stretch at 199–210 (RGAPAGPDPIHH) is one CLE-4 repeat.

This sequence belongs to the CLV3/ESR signal peptide family. In terms of tissue distribution, highly expressed exclusively within the dorsal esophageal gland cell during syncytium formation in host plants.

The protein localises to the secreted. It is found in the host cytoplasm. The protein resides in the host extracellular space. It localises to the extracellular space. Its subcellular location is the apoplast. Functionally, mimics host plant CLE extracellular signal peptides that regulate cell fate. May play a role in the differentiation or division of feeding cells (syncytia) induced in plant roots during infection. The protein is CLAVATA3/ESR (CLE)-related protein 4D (CLE-4D) of Globodera rostochiensis (Golden nematode worm).